We begin with the raw amino-acid sequence, 305 residues long: Probable pyridoxal 5'-phosphate synthase subunit pdx1 (305 aa).

Asp33 is a binding site for D-ribose 5-phosphate. Residue Lys90 is the Schiff-base intermediate with D-ribose 5-phosphate of the active site. D-ribose 5-phosphate is bound at residue Gly162. Arg174 contributes to the D-glyceraldehyde 3-phosphate binding site. D-ribose 5-phosphate-binding positions include Gly223 and 244 to 245 (GS).

It belongs to the PdxS/SNZ family. In terms of assembly, homohexamer.

It catalyses the reaction aldehydo-D-ribose 5-phosphate + D-glyceraldehyde 3-phosphate + L-glutamine = pyridoxal 5'-phosphate + L-glutamate + phosphate + 3 H2O + H(+). Its pathway is cofactor biosynthesis; pyridoxal 5'-phosphate biosynthesis. Its function is as follows. Catalyzes the formation of pyridoxal 5'-phosphate from ribose 5-phosphate (RBP), glyceraldehyde 3-phosphate (G3P) and ammonia. The ammonia is provided by pdx2. Can also use ribulose 5-phosphate and dihydroxyacetone phosphate as substrates, resulting from enzyme-catalyzed isomerization of RBP and G3P, respectively. The protein is Probable pyridoxal 5'-phosphate synthase subunit pdx1 (pdx1) of Dictyostelium discoideum (Social amoeba).